A 68-amino-acid polypeptide reads, in one-letter code: Small ribosomal subunit protein bS21 (68 aa).

The disordered stretch occupies residues 39–68; it reads PPSVKRVRKKQESERRHRKERAMRRRMMEE. Residues 54-68 are compositionally biased toward basic residues; the sequence is RHRKERAMRRRMMEE.

Belongs to the bacterial ribosomal protein bS21 family.

The polypeptide is Small ribosomal subunit protein bS21 (Orientia tsutsugamushi (strain Boryong) (Rickettsia tsutsugamushi)).